The chain runs to 151 residues: Ubiquitin-conjugating enzyme E2 2 (151 aa).

The UBC core domain occupies 4 to 150; the sequence is AARRRLMRDF…VRETVEKSWE (147 aa). Residue cysteine 88 is the Glycyl thioester intermediate of the active site.

This sequence belongs to the ubiquitin-conjugating enzyme family.

It localises to the cytoplasm. It is found in the nucleus. It carries out the reaction S-ubiquitinyl-[E1 ubiquitin-activating enzyme]-L-cysteine + [E2 ubiquitin-conjugating enzyme]-L-cysteine = [E1 ubiquitin-activating enzyme]-L-cysteine + S-ubiquitinyl-[E2 ubiquitin-conjugating enzyme]-L-cysteine.. The protein operates within protein modification; protein ubiquitination. Functionally, catalyzes the covalent attachment of ubiquitin to other proteins. Plays a role in transcription regulation by catalyzing the monoubiquitination of histone H2B to form H2BK123ub1. H2BK123ub1 gives a specific tag for epigenetic transcriptional activation and is also a prerequisite for H3K4me and H3K79me formation. Also involved in postreplication repair of UV-damaged DNA, in N-end rule-dependent protein degradation and in sporulation. The polypeptide is Ubiquitin-conjugating enzyme E2 2 (mus-8) (Neurospora crassa (strain ATCC 24698 / 74-OR23-1A / CBS 708.71 / DSM 1257 / FGSC 987)).